The following is a 154-amino-acid chain: Prefoldin subunit 5 (154 aa).

Residue Ala-2 is modified to N-acetylalanine. Lys-42 carries the N6-acetyllysine modification. The residue at position 56 (Ser-56) is a Phosphoserine.

It belongs to the prefoldin subunit alpha family. In terms of assembly, heterohexamer of two PFD-alpha type and four PFD-beta type subunits.

The protein resides in the nucleus. In terms of biological role, binds specifically to cytosolic chaperonin (c-CPN) and transfers target proteins to it. Binds to nascent polypeptide chain and promotes folding in an environment in which there are many competing pathways for nonnative proteins. Represses the transcriptional activity of MYC. The polypeptide is Prefoldin subunit 5 (Pfdn5) (Mus musculus (Mouse)).